A 262-amino-acid chain; its full sequence is uncharacterized protein (262 aa).

7 helical membrane passes run 46–66 (GAVGWQLAGLTALLSAFCYAA), 77–97 (CLTESSPSLVFVIPVTSVIFI), 108–128 (IGVLLFYTLLHVPPLIVICLC), 133–153 (LVISAALFTLLAFLSCTGVAL), 163–183 (QIVVVHALITLTFTAIVVVIL), 186–206 (GWSWCFKIVLSFSVLITCLAV), and 226–246 (LLAAVKVFLSLVFTLLMVLRI).

The protein belongs to the cytomegalovirus US12 family.

It is found in the membrane. This is an uncharacterized protein from Homo sapiens (Human).